The primary structure comprises 115 residues: Probable 4-amino-4-deoxy-L-arabinose-phosphoundecaprenol flippase subunit ArnE (115 aa).

3 helical membrane-spanning segments follow: residues 42 to 62 (PWPW…LLLL), 65 to 85 (VEVG…TLVA), and 93 to 112 (VDRR…ALLG). Positions 46–113 (LALLALGLGL…IVAGVALLGR (68 aa)) constitute an EamA domain.

It belongs to the ArnE family. In terms of assembly, heterodimer of ArnE and ArnF.

It localises to the cell inner membrane. It participates in bacterial outer membrane biogenesis; lipopolysaccharide biosynthesis. Translocates 4-amino-4-deoxy-L-arabinose-phosphoundecaprenol (alpha-L-Ara4N-phosphoundecaprenol) from the cytoplasmic to the periplasmic side of the inner membrane. This Pseudomonas paraeruginosa (strain DSM 24068 / PA7) (Pseudomonas aeruginosa (strain PA7)) protein is Probable 4-amino-4-deoxy-L-arabinose-phosphoundecaprenol flippase subunit ArnE.